Reading from the N-terminus, the 197-residue chain is Imidazoleglycerol-phosphate dehydratase (197 aa).

The protein belongs to the imidazoleglycerol-phosphate dehydratase family.

Its subcellular location is the cytoplasm. The catalysed reaction is D-erythro-1-(imidazol-4-yl)glycerol 3-phosphate = 3-(imidazol-4-yl)-2-oxopropyl phosphate + H2O. Its pathway is amino-acid biosynthesis; L-histidine biosynthesis; L-histidine from 5-phospho-alpha-D-ribose 1-diphosphate: step 6/9. This Leptospira biflexa serovar Patoc (strain Patoc 1 / Ames) protein is Imidazoleglycerol-phosphate dehydratase.